Reading from the N-terminus, the 390-residue chain is ATP-sensitive inward rectifier potassium channel 11 (390 aa).

Residues 1-65 (MLSRKGIIPE…LQDVFTTLVD (65 aa)) lie on the Cytoplasmic side of the membrane. 2 residues coordinate ATP: Asn48 and Arg50. Residues 66-92 (LKWTHTLLIFTMSFLCSWLLFAMVWWL) traverse the membrane as a helical segment. Residues 93–116 (IAFAHGDLAPGEGAAVPCVTSIHS) are Extracellular-facing. An intrachain disulfide couples Cys110 to Cys142. Positions 117 to 133 (FSSAFLFSIEVQVTIGF) form an intramembrane region, discontinuously helical; Pore-forming. 2 residues coordinate K(+): Thr130 and Phe133. Positions 130-135 (TIGFGG) match the Selectivity filter motif. Residues 134–142 (GGRMVTEEC) lie on the Extracellular side of the membrane. A helical membrane pass occupies residues 143-171 (PLAILILIVQNIVGLMINAIMLGCIFMKT). Residues 172-390 (AQAHRRAETL…KFSISPDSLS (219 aa)) are Cytoplasmic-facing. Arg176 is an a 1,2-diacyl-sn-glycero-3-phospho-(1D-myo-inositol-4,5-bisphosphate) binding site. An ATP-binding site is contributed by Tyr330. Thr341 is subject to Phosphothreonine; by MAPK1. At Ser385 the chain carries Phosphoserine; by MAPK1.

The protein belongs to the inward rectifier-type potassium channel (TC 1.A.2.1) family. KCNJ11 subfamily. In terms of assembly, homotetramer; the homotetramer binds four ATP molecules (one ATP per subunit). Forms an heterooctamer with ABCC8/SUR1; one KCNJ11 homotetramer interacts with four ABCC8/SUR1 molecules. Interacts with ABCC9/SUR2. Phosphorylation by MAPK1 results in changes in channel gating that destabilize the closed states and reduce the ATP sensitivity.

Its subcellular location is the membrane. It carries out the reaction K(+)(in) = K(+)(out). Its activity is regulated as follows. KATP channels are regulated by cytoplasmic ATP/ADP ratios; ATP inhibits the channel by closing the pore, while ADP activates the channel. Activated by phosphatidylinositol 4,5-biphosphate (PtdIns(4,5)P2). Functionally, inward rectifier potassium channel that forms the pore of ATP-sensitive potassium channels (KATP), regulating potassium permeability as a function of cytoplasmic ATP and ADP concentrations in many different cells. Inward rectifier potassium channels are characterized by a greater tendency to allow potassium to flow into the cell rather than out of it. Their voltage dependence is regulated by the concentration of extracellular potassium; as external potassium is raised, the voltage range of the channel opening shifts to more positive voltages. The inward rectification is mainly due to the blockage of outward current by internal magnesium. Can be blocked by extracellular barium. In pancreatic cells, it forms KATP channels with ABCC8/SUR1. Can form cardiac and smooth muscle-type KATP channels with ABCC9. In Oryctolagus cuniculus (Rabbit), this protein is ATP-sensitive inward rectifier potassium channel 11 (KCNJ11).